Reading from the N-terminus, the 237-residue chain is Tetraspanin-8 (237 aa).

Residues 1–9 are Cytoplasmic-facing; sequence MAGVSACIK. A helical transmembrane segment spans residues 10–33; that stretch reads YSMFTFNFLFWLCGILILALAIWV. Residues 34–57 are Extracellular-facing; that stretch reads RVSNDSQAIFGSEDVGSSSYVAVD. A helical membrane pass occupies residues 58-72; that stretch reads ILIAVGAIIMILGFL. The Cytoplasmic portion of the chain corresponds to 73-83; sequence GCCGAIKESRC. A helical transmembrane segment spans residues 84 to 109; the sequence is MLLLFFIGLLLILLLQVATGILGAVF. Over 110–205 the chain is Extracellular; that stretch reads KSKSDRIVNE…SFIKDFLAKN (96 aa). N-linked (GlcNAc...) asparagine glycosylation is present at N118. A helical membrane pass occupies residues 206-230; that stretch reads LIIVIGISFGLAVIEILGLVFSMVL. At 231 to 237 the chain is on the cytoplasmic side; that stretch reads YCQIGNK.

It belongs to the tetraspanin (TM4SF) family. In terms of assembly, forms homooligomers. Interacts with MEP1B. Interacts with integrin alpha3/ITGA3. Interacts with RICTOR and MTOR. Interacts with ADAM17. Interacts with ECE1. Gastric, colon, rectal, and pancreatic carcinomas.

The protein resides in the cell membrane. In terms of biological role, structural component of specialized membrane microdomains known as tetraspanin-enriched microdomains (TERMs), which act as platforms for receptor clustering and signaling. Participates thereby in diverse biological functions such as cell signal transduction, migration and protein trafficking. Promotes ADAM17-mediated TNF-alpha processing through recruitment of ADAM17 to tetraspanin-enriched micro-domains (TEMs). Forms a complex with RICTOR and integrin alpha3/ITGA3 to mediate mTORC2 activation and AKT1 phosphorylation leading to cell migration. Reduces apoptosis and autophagy induced by high glucose levels through forming a complex with mTOR and RICTOR. Contributes to the maintenance of intestinal epithelial barrier and plays a role in the regulation of intestine inflammation by switching interferon gamma receptor 1/IFNGR1 from clathrin-dependent to lipid raft-dependent endocytosis route to limit STAT1 activation magnitude and duration. Acts as a modulator of the endothelin axis by associating with endothelin converting enzyme ECE1 and regulating its activity of conversion of the endothelin-1 precursor to endothelin. This is Tetraspanin-8 (TSPAN8) from Homo sapiens (Human).